Consider the following 355-residue polypeptide: Ribosomal RNA large subunit methyltransferase M (355 aa).

S-adenosyl-L-methionine-binding positions include Ser-191, 224–227, Asp-243, Asp-263, and Asp-279; that span reads APGG. Lys-308 serves as the catalytic Proton acceptor.

Belongs to the class I-like SAM-binding methyltransferase superfamily. RNA methyltransferase RlmE family. RlmM subfamily. As to quaternary structure, monomer.

It is found in the cytoplasm. It catalyses the reaction cytidine(2498) in 23S rRNA + S-adenosyl-L-methionine = 2'-O-methylcytidine(2498) in 23S rRNA + S-adenosyl-L-homocysteine + H(+). Catalyzes the 2'-O-methylation at nucleotide C2498 in 23S rRNA. This chain is Ribosomal RNA large subunit methyltransferase M, found in Stenotrophomonas maltophilia (strain K279a).